Here is a 198-residue protein sequence, read N- to C-terminus: Phosphoheptose isomerase (198 aa).

Positions 36–195 (AIEVYQNGNK…EEAIFRNKFV (160 aa)) constitute an SIS domain. 51 to 53 (NGG) provides a ligand contact to substrate. Positions 60 and 64 each coordinate Zn(2+). Substrate contacts are provided by residues glutamate 64, 93 to 94 (ND), 119 to 121 (STS), serine 124, and glutamine 171. Zn(2+)-binding residues include glutamine 171 and histidine 179.

The protein belongs to the SIS family. GmhA subfamily. Zn(2+) serves as cofactor.

The protein localises to the cytoplasm. The enzyme catalyses 2 D-sedoheptulose 7-phosphate = D-glycero-alpha-D-manno-heptose 7-phosphate + D-glycero-beta-D-manno-heptose 7-phosphate. It participates in carbohydrate biosynthesis; D-glycero-D-manno-heptose 7-phosphate biosynthesis; D-glycero-alpha-D-manno-heptose 7-phosphate and D-glycero-beta-D-manno-heptose 7-phosphate from sedoheptulose 7-phosphate: step 1/1. It functions in the pathway cell surface structure biogenesis; S-layer biogenesis. Its function is as follows. Catalyzes the isomerization of sedoheptulose 7-phosphate in D-glycero-D-manno-heptose 7-phosphate. This Aneurinibacillus thermoaerophilus protein is Phosphoheptose isomerase.